Consider the following 31-residue polypeptide: Cyclotide mra3 (31 aa).

3 disulfides stabilise this stretch: C5–C21, C9–C23, and C14–C28.

This is a cyclic peptide. In terms of processing, contains 3 disulfide bonds.

Its function is as follows. Probably participates in a plant defense mechanism. This chain is Cyclotide mra3, found in Melicytus ramiflorus (Whitey wood).